The sequence spans 697 residues: Ribosomal RNA large subunit methyltransferase K/L (697 aa).

One can recognise a THUMP domain in the interval 43–154 (ILYNSLMWSR…QNLVHIMLDL (112 aa)).

It belongs to the methyltransferase superfamily. RlmKL family.

Its subcellular location is the cytoplasm. The enzyme catalyses guanosine(2445) in 23S rRNA + S-adenosyl-L-methionine = N(2)-methylguanosine(2445) in 23S rRNA + S-adenosyl-L-homocysteine + H(+). The catalysed reaction is guanosine(2069) in 23S rRNA + S-adenosyl-L-methionine = N(2)-methylguanosine(2069) in 23S rRNA + S-adenosyl-L-homocysteine + H(+). Functionally, specifically methylates the guanine in position 2445 (m2G2445) and the guanine in position 2069 (m7G2069) of 23S rRNA. The polypeptide is Ribosomal RNA large subunit methyltransferase K/L (Buchnera aphidicola subsp. Schizaphis graminum (strain Sg)).